Consider the following 432-residue polypeptide: MKAILIPFLSLLIPLTPQSAFAQSEPELKLESVVIVSRHGVRAPTKATQLMQDVTPDAWPTWPVKLGWLTPRGGELIAYLGHYQRQRLVADGLLAKKGCPQSGQVAIIADVDERTRKTGEAFAAGLAPDCAITVHTQADTSSPDPLFNPLKTGVCQLDNANVTDAILSRAGGSIADFTGHRQTAFRELERVLNFPQSNLCLKREKQDESCSLTQALPSELKVSADNVSLTGAVSLASMLTEIFLLQQAQGMPEPGWGRITDSHQWNTLLSLHNAQFYLLQRTPEVARSRATPLLDLIKTALTPHPPQKQAYGVTLPTSVLFIAGHDTNLANLGGALELNWTLPGQPDNTPPGGELVFERWRRLSDNSQWIQVSLVFQTLQQMRDKTPLSLNTPPGEVKLTLAGCEERNAQGMCSLAGFTQIVNEARIPACSL.

The first 22 residues, 1–22, serve as a signal peptide directing secretion; it reads MKAILIPFLSLLIPLTPQSAFA. R38 contacts 1D-myo-inositol hexakisphosphate. Catalysis depends on H39, which acts as the Nucleophile. 1D-myo-inositol hexakisphosphate-binding positions include 42 to 46 and R114; that span reads RAPTK. Cystine bridges form between C99/C130, C155/C430, C200/C210, and C404/C413. Residues R289 and 325-327 each bind 1D-myo-inositol hexakisphosphate; that span reads HDT. Residue D326 is the Proton donor of the active site.

Belongs to the histidine acid phosphatase family. In terms of assembly, monomer.

Its subcellular location is the periplasm. It catalyses the reaction 1D-myo-inositol hexakisphosphate + H2O = 1D-myo-inositol 1,2,3,4,5-pentakisphosphate + phosphate. The catalysed reaction is 1D-myo-inositol 1,2,3,4,5-pentakisphosphate + H2O = 1D-myo-inositol 2,3,4,5-tetrakisphosphate + phosphate. It carries out the reaction 1D-myo-inositol 2,3,4,5-tetrakisphosphate + H2O = 1D-myo-inositol 2,4,5-triphosphate + phosphate. The enzyme catalyses 1D-myo-inositol 2,4,5-triphosphate + H2O = 1D-myo-inositol 2,5-bisphosphate + phosphate. It catalyses the reaction 1D-myo-inositol 2,5-bisphosphate + H2O = 1D-myo-inositol 2-phosphate + phosphate. The catalysed reaction is GTP + H2O = GDP + phosphate + H(+). Its activity is regulated as follows. Contains three consecutive and one non-consecutive disulfide bonds and shows a strong dependence on DsbC for its full activity. Competitively inhibited by tartaric acid and by sodium fluorid. Its function is as follows. Catalyzes the hydrolysis of phytate (or myo-inositol hexakisphosphate, an indigestible organic form of phosphorus that is found in many plant tissues) to myo-inositol and inorganic phosphate. Dephosphorylates phytate in a stereospecific way by sequential removal of phosphate groups to produce myo-inositol 2-monophosphate. Also shows phosphoanhydride phosphatase activity and hydrolyzes the distal phosphoryl residues of GTP, the 5'-beta-phosphoryl residue of the regulatory nucleotide ppGpp and tripolyphosphates. Does not split most phosphomonoesters with the exception of the synthetic substrate p-nitrophenyl phosphate (pNPP), 2,3-bisphosphoglycerate and fructose 1,6-bisphosphate. The sequence is that of Phytase AppA from Escherichia coli (strain K12).